The following is a 214-amino-acid chain: Elongation factor Ts (214 aa).

Residues 80–83 form an involved in Mg(2+) ion dislocation from EF-Tu region; sequence TDFV.

The protein belongs to the EF-Ts family.

The protein localises to the cytoplasm. Its function is as follows. Associates with the EF-Tu.GDP complex and induces the exchange of GDP to GTP. It remains bound to the aminoacyl-tRNA.EF-Tu.GTP complex up to the GTP hydrolysis stage on the ribosome. This Syntrophomonas wolfei subsp. wolfei (strain DSM 2245B / Goettingen) protein is Elongation factor Ts.